Here is a 397-residue protein sequence, read N- to C-terminus: MTDHVREADDANIDDLLGDLGGTARAERAKLVEWLLEQGITPDEIRATNPPLLLATRHLVGDDGTYVSAREISENYGVDLELLQRVQRAVGLARVDDPDAVVHMRADGEAAARAQRFVELGLNPDQVVLVVRVLAEGLSHAAEAMRYTALEAIMRPGATELDIAKGSQALVSQIVPLLGPMIQDMLFMQLRHMMETEAVNAGERAAGKPLPGARQVTVAFADLVGFTQLGEVVSAEELGHLAGRLAGLARDLTAPPVWFIKTIGDAVMLVCPDPAPLLDTVLKLVEVVDTDNNFPRLRAGVASGMAVSRAGDWFGSPVNVASRVTGVARPGAVLVADSVREALGDAPEADGFQWSFAGPRRLRGIRGDVRLFRVRRGATRTGSGGAAQDDDLAGSSP.

Residues 1-191 form a regulatory domain region; the sequence is MTDHVREADD…IQDMLFMQLR (191 aa). Residues 192–206 are linker; sequence HMMETEAVNAGERAA. A catalytic domain region spans residues 211 to 397; sequence PGARQVTVAF…QDDDLAGSSP (187 aa). Residues 217–325 enclose the Guanylate cyclase domain; sequence TVAFADLVGF…SPVNVASRVT (109 aa). Asp-222 is a binding site for Mn(2+). Lys-261 serves as a coordination point for substrate. Position 265 (Asp-265) interacts with Mn(2+). Arg-298 is an ATP binding site. Asp-312 contributes to the substrate binding site.

It belongs to the adenylyl cyclase class-4/guanylyl cyclase family. Homodimer. Requires Mn(2+) as cofactor. The cofactor is Mg(2+).

The enzyme catalyses ATP = 3',5'-cyclic AMP + diphosphate. In terms of biological role, catalyzes the formation of the second messenger cAMP. The polypeptide is pH-sensitive adenylate cyclase MT1302 (Mycobacterium tuberculosis (strain CDC 1551 / Oshkosh)).